The following is a 393-amino-acid chain: MTEEFNESMINDIKEGDKVTGEVQEIEEKQVIVAVNGAKFNGIIPISQLSTHHIDNPSDAVKVGDEIGAYVTKVEYDEENETGAYILSKRQLETEKSYEFLQEQLDNNQTIEAKVTEVVKGGLVVDVGQRGFVPASLISTDFIEDFSDFEGQVLKLKVEELDPANNRVILSRKAVEALENAEKKDELLESLNEGDVIEGKVARLTNFGAFVDIGGVDGLVHVSELSHEHVKSPEDVVSIGETVNVKIKSVDKDSERISLSIKDTLPSPFESIKGEFNEGDVIEGTVVRLANFGAFVEIKPGVQGLVHISEISHSHIGSPSEALEPGQVVSVKVLGVDVENERISLSIKATLPNENVIESDSETTQSYLDNGSDDEDNPTLGDVFGDKLKDFKF.

4 consecutive S1 motif domains span residues 16–90 (GDKV…LSKR), 108–173 (NQTI…LSRK), 194–262 (GDVI…LSIK), and 279–348 (GDVI…LSIK). Over residues 356 to 369 (VIESDSETTQSYLD) the composition is skewed to polar residues. Residues 356–381 (VIESDSETTQSYLDNGSDDEDNPTLG) are disordered.

This sequence belongs to the bacterial ribosomal protein bS1 family.

Its function is as follows. Binds mRNA; thus facilitating recognition of the initiation point. It is needed to translate mRNA with a short Shine-Dalgarno (SD) purine-rich sequence. The polypeptide is Small ribosomal subunit protein bS1 (rpsA) (Staphylococcus saprophyticus subsp. saprophyticus (strain ATCC 15305 / DSM 20229 / NCIMB 8711 / NCTC 7292 / S-41)).